Here is a 93-residue protein sequence, read N- to C-terminus: Large ribosomal subunit protein uL23 (93 aa).

The protein belongs to the universal ribosomal protein uL23 family. Part of the 50S ribosomal subunit. Contacts protein L29, and trigger factor when it is bound to the ribosome.

One of the early assembly proteins it binds 23S rRNA. One of the proteins that surrounds the polypeptide exit tunnel on the outside of the ribosome. Forms the main docking site for trigger factor binding to the ribosome. The polypeptide is Large ribosomal subunit protein uL23 (Helicobacter acinonychis (strain Sheeba)).